We begin with the raw amino-acid sequence, 485 residues long: DNA polymerase subunit gamma-2 (485 aa).

Residues 28 to 65 are disordered; the sequence is GQPELLTERSSPKGGHVKSHAELEGNGEHPEAPGSGEG. S38 is subject to Phosphoserine. Over residues 46–58 the composition is skewed to basic and acidic residues; the sequence is SHAELEGNGEHPE.

As to quaternary structure, heterotrimer composed of a catalytic subunit and a homodimer of accessory subunits (POLG:POLG2).

The protein resides in the mitochondrion. Its subcellular location is the mitochondrion matrix. The protein localises to the mitochondrion nucleoid. In terms of biological role, accessory subunit of DNA polymerase gamma solely responsible for replication of mitochondrial DNA (mtDNA). Acts as an allosteric regulator of the holoenzyme activities. Enhances the polymerase activity and the processivity of POLG by increasing its interactions with the DNA template. Suppresses POLG exonucleolytic proofreading especially toward homopolymeric templates bearing mismatched termini. Binds to single-stranded DNA. This chain is DNA polymerase subunit gamma-2, found in Homo sapiens (Human).